A 146-amino-acid polypeptide reads, in one-letter code: D-aminoacyl-tRNA deacylase (146 aa).

The Gly-cisPro motif, important for rejection of L-amino acids signature appears at 137 to 138; it reads GP.

This sequence belongs to the DTD family. As to quaternary structure, homodimer.

The protein localises to the cytoplasm. The catalysed reaction is glycyl-tRNA(Ala) + H2O = tRNA(Ala) + glycine + H(+). The enzyme catalyses a D-aminoacyl-tRNA + H2O = a tRNA + a D-alpha-amino acid + H(+). Its function is as follows. An aminoacyl-tRNA editing enzyme that deacylates mischarged D-aminoacyl-tRNAs. Also deacylates mischarged glycyl-tRNA(Ala), protecting cells against glycine mischarging by AlaRS. Acts via tRNA-based rather than protein-based catalysis; rejects L-amino acids rather than detecting D-amino acids in the active site. By recycling D-aminoacyl-tRNA to D-amino acids and free tRNA molecules, this enzyme counteracts the toxicity associated with the formation of D-aminoacyl-tRNA entities in vivo and helps enforce protein L-homochirality. In Deinococcus deserti (strain DSM 17065 / CIP 109153 / LMG 22923 / VCD115), this protein is D-aminoacyl-tRNA deacylase.